A 494-amino-acid chain; its full sequence is Aspartyl/glutamyl-tRNA(Asn/Gln) amidotransferase subunit B (494 aa).

Belongs to the GatB/GatE family. GatB subfamily. Heterotrimer of A, B and C subunits.

It carries out the reaction L-glutamyl-tRNA(Gln) + L-glutamine + ATP + H2O = L-glutaminyl-tRNA(Gln) + L-glutamate + ADP + phosphate + H(+). The catalysed reaction is L-aspartyl-tRNA(Asn) + L-glutamine + ATP + H2O = L-asparaginyl-tRNA(Asn) + L-glutamate + ADP + phosphate + 2 H(+). Functionally, allows the formation of correctly charged Asn-tRNA(Asn) or Gln-tRNA(Gln) through the transamidation of misacylated Asp-tRNA(Asn) or Glu-tRNA(Gln) in organisms which lack either or both of asparaginyl-tRNA or glutaminyl-tRNA synthetases. The reaction takes place in the presence of glutamine and ATP through an activated phospho-Asp-tRNA(Asn) or phospho-Glu-tRNA(Gln). In Synechococcus sp. (strain CC9605), this protein is Aspartyl/glutamyl-tRNA(Asn/Gln) amidotransferase subunit B.